A 1009-amino-acid chain; its full sequence is RNA2 polyprotein (1009 aa).

An involved in tubule formation by the movement protein region spans residues 387–393 (FVYKIGG).

In terms of assembly, interacts with the large capsid protein. Interacts with the small capsid protein. Homomultimer; assembles as pentons. Interacts with the movement protein (via C-terminus). As to quaternary structure, interacts (via C-terminus) with the large capsid protein. Specific enzymatic cleavages by picornain 3C-like protease in vivo yield mature proteins.

The protein resides in the host cell junction. It localises to the host plasmodesma. Its subcellular location is the virion. Functionally, responsible for viral RNA2 accumulation. May function by recruiting the RNA1-encoded polyprotein that contains the replication protein to RNA2 and enable its replication. In terms of biological role, transports the viral genome to neighboring plant cells directly through plasmosdesmata, without any budding. The movement protein allows efficient cell to cell propagation, by bypassing the host cell wall barrier. Acts by forming a tubular structure at the host plasmodesmata, enlarging it enough to allow free passage of virion capsids. Binds to GTP and to single-stranded RNA and single-stranded DNA in a non-sequence-specific manner. Its function is as follows. Together with the small capsid protein, forms an icosahedral capsid (T=3) enclosing the viral positive strand RNA genome, with a diameter of approximately 300 Angstroms. The capsid is formed from 60 copies each of the large and the small capsid protein. The large capsid protein interacts with the viral RNA. Together with the large capsid protein, forms an icosahedral capsid (T=3) enclosing the viral positive strand RNA genome, with a diameter of approximately 300 Angstroms. The capsid is formed from 60 copies each of the large and the small capsid protein. The small capsid protein forms the turrets at the fivefold axes of the viral particle. The polypeptide is RNA2 polyprotein (Squash mosaic virus (strain melon) (SqMV)).